The sequence spans 454 residues: tRNA modification GTPase MnmE (454 aa).

(6S)-5-formyl-5,6,7,8-tetrahydrofolate is bound by residues Arg-23, Glu-80, and Lys-120. Residues 216–377 form the TrmE-type G domain; sequence GMKVVIAGRP…LRNHLKQSMG (162 aa). Asn-226 serves as a coordination point for K(+). GTP is bound by residues 226 to 231, 245 to 251, 270 to 273, 335 to 338, and 358 to 360; these read NAGKSS, TDIAGTT, DTAG, NKAD, and SAR. Ser-230 contacts Mg(2+). The K(+) site is built by Thr-245, Ile-247, and Thr-250. Thr-251 contributes to the Mg(2+) binding site. Position 454 (Lys-454) interacts with (6S)-5-formyl-5,6,7,8-tetrahydrofolate.

Belongs to the TRAFAC class TrmE-Era-EngA-EngB-Septin-like GTPase superfamily. TrmE GTPase family. In terms of assembly, homodimer. Heterotetramer of two MnmE and two MnmG subunits. Requires K(+) as cofactor.

It is found in the cytoplasm. Its function is as follows. Exhibits a very high intrinsic GTPase hydrolysis rate. Involved in the addition of a carboxymethylaminomethyl (cmnm) group at the wobble position (U34) of certain tRNAs, forming tRNA-cmnm(5)s(2)U34. This chain is tRNA modification GTPase MnmE, found in Yersinia enterocolitica serotype O:8 / biotype 1B (strain NCTC 13174 / 8081).